The primary structure comprises 233 residues: Ribose-5-phosphate isomerase A (233 aa).

Residues 31–34 (SGST), 87–90 (DGAD), and 100–103 (KGGG) each bind substrate. The Proton acceptor role is filled by glutamate 109. Lysine 127 is a binding site for substrate.

This sequence belongs to the ribose 5-phosphate isomerase family. In terms of assembly, homodimer.

The catalysed reaction is aldehydo-D-ribose 5-phosphate = D-ribulose 5-phosphate. It participates in carbohydrate degradation; pentose phosphate pathway; D-ribose 5-phosphate from D-ribulose 5-phosphate (non-oxidative stage): step 1/1. Catalyzes the reversible conversion of ribose-5-phosphate to ribulose 5-phosphate. The chain is Ribose-5-phosphate isomerase A from Chlamydia caviae (strain ATCC VR-813 / DSM 19441 / 03DC25 / GPIC) (Chlamydophila caviae).